A 291-amino-acid polypeptide reads, in one-letter code: Porphobilinogen deaminase (291 aa).

Cys-237 carries the S-(dipyrrolylmethanemethyl)cysteine modification.

The protein belongs to the HMBS family. In terms of assembly, monomer. Dipyrromethane serves as cofactor.

The catalysed reaction is 4 porphobilinogen + H2O = hydroxymethylbilane + 4 NH4(+). Its pathway is porphyrin-containing compound metabolism; protoporphyrin-IX biosynthesis; coproporphyrinogen-III from 5-aminolevulinate: step 2/4. Tetrapolymerization of the monopyrrole PBG into the hydroxymethylbilane pre-uroporphyrinogen in several discrete steps. This is Porphobilinogen deaminase from Clostridium perfringens (strain ATCC 13124 / DSM 756 / JCM 1290 / NCIMB 6125 / NCTC 8237 / Type A).